The primary structure comprises 586 residues: Arginine--tRNA ligase (586 aa).

A 'HIGH' region motif is present at residues 127 to 137 (PNVAKEMHVGH).

The protein belongs to the class-I aminoacyl-tRNA synthetase family. Monomer.

Its subcellular location is the cytoplasm. The catalysed reaction is tRNA(Arg) + L-arginine + ATP = L-arginyl-tRNA(Arg) + AMP + diphosphate. The chain is Arginine--tRNA ligase (argS) from Streptomyces coelicolor (strain ATCC BAA-471 / A3(2) / M145).